The primary structure comprises 177 residues: Small ribosomal subunit protein uS5 (177 aa).

In terms of domain architecture, S5 DRBM spans 21 to 84 (LLDRVVKIKR…KQASRSMIHV (64 aa)).

It belongs to the universal ribosomal protein uS5 family. In terms of assembly, part of the 30S ribosomal subunit. Contacts proteins S4 and S8.

Functionally, with S4 and S12 plays an important role in translational accuracy. In terms of biological role, located at the back of the 30S subunit body where it stabilizes the conformation of the head with respect to the body. This is Small ribosomal subunit protein uS5 from Rhodopirellula baltica (strain DSM 10527 / NCIMB 13988 / SH1).